The primary structure comprises 141 residues: Hemoglobin subunit alpha (141 aa).

Residues 1-141 form the Globin domain; that stretch reads VLSPADKTNL…VSTVLTSKYR (141 aa). S3 carries the post-translational modification Phosphoserine. At K7 the chain carries N6-succinyllysine. T8 bears the Phosphothreonine mark. The residue at position 11 (K11) is an N6-succinyllysine. K16 is modified (N6-acetyllysine; alternate). The residue at position 16 (K16) is an N6-succinyllysine; alternate. At Y24 the chain carries Phosphotyrosine. N6-succinyllysine is present on K40. The residue at position 49 (S49) is a Phosphoserine. O2 is bound at residue H58. H87 provides a ligand contact to heme b. Phosphoserine is present on S102. At T108 the chain carries Phosphothreonine. Residue S124 is modified to Phosphoserine. Phosphothreonine is present on residues T134 and T137. S138 is modified (phosphoserine).

The protein belongs to the globin family. As to quaternary structure, heterotetramer of two alpha chains and two beta chains. As to expression, red blood cells.

In terms of biological role, involved in oxygen transport from the lung to the various peripheral tissues. The protein is Hemoglobin subunit alpha of Tamias striatus (Eastern chipmunk).